The chain runs to 105 residues: Cell division protein FtsL (105 aa).

The Cytoplasmic portion of the chain corresponds to 1–22 (MIGNERHGLVGVIGADLIRNAK). The helical transmembrane segment at 23–43 (IPLILLVAVLISAVLVVTTAH) threads the bilayer. Over 44–105 (RTRLLTAERE…DPSQENIVIK (62 aa)) the chain is Periplasmic.

Belongs to the FtsL family. In terms of assembly, part of a complex composed of FtsB, FtsL and FtsQ.

Its subcellular location is the cell inner membrane. Functionally, essential cell division protein. May link together the upstream cell division proteins, which are predominantly cytoplasmic, with the downstream cell division proteins, which are predominantly periplasmic. This is Cell division protein FtsL from Yersinia pestis.